The following is a 308-amino-acid chain: Phosphoribosylaminoimidazole-succinocarboxamide synthase (308 aa).

Belongs to the SAICAR synthetase family.

It catalyses the reaction 5-amino-1-(5-phospho-D-ribosyl)imidazole-4-carboxylate + L-aspartate + ATP = (2S)-2-[5-amino-1-(5-phospho-beta-D-ribosyl)imidazole-4-carboxamido]succinate + ADP + phosphate + 2 H(+). The protein operates within purine metabolism; IMP biosynthesis via de novo pathway; 5-amino-1-(5-phospho-D-ribosyl)imidazole-4-carboxamide from 5-amino-1-(5-phospho-D-ribosyl)imidazole-4-carboxylate: step 1/2. The polypeptide is Phosphoribosylaminoimidazole-succinocarboxamide synthase (Xylella fastidiosa (strain 9a5c)).